The following is a 1220-amino-acid chain: MWLITILATISCVTAQLSQTNPDCPIPTCTILPPPKTTLDNTKFRVVYTKDQEALIYATNFTSPFNNAQYPLPTLGNHLNRSYTLNYDKVFLNIADSPDMLNLKTSWTVVNNSNLCPLSPSVYRSTSPLQTLTTAEQYCFMTTATLTSAFLYDYTAMKPVGYIRARAEETISFFSIMKTNMVNRPTSPSLSQAHTHTLAAMRTTATGIQAQTFKPQTGFFIVLDASRARAVTNPLDTAIQPKFSPSFIKEVTFDHIFQTTINETARSVTRETTTGYIMNAAKTGALYKASPAYYLFLISSDCRLQQALSVPYDFSLGRFCPASMSCCLNKGYEQYYVNTWLFHYYNLKRLNVLNLESSPVSDHFIQLHRTFNTEHSMHCDGSPYASDTTYNIALLRDTVQFLNGTKTTTPLANEIPQLTDSLGYLKYQPDMVDASDHQNYMAYVTYLMAIFYPTFTEAQKFEFHNLLQSVCYFDKGSISRNQAYHSICHIISFQTTASVPYPIELQIPFTTEPTSGYNAYLVKTPIGSVAIGNQNPFDGEGVCFLTTCIYHPTKKINQKLTIPPVRWQVVPEGIAVVTGIPPNCLGYETYTQGSSFFTIYNDSKPCQPQTMQIAQARSVITTVYSAAQKSDIFVQPYGKSSWVNGSYQFDQFVGGALNLRTLTFTMRKPTQLYVLDPIEGTYIIPDYQTKFPLLTSGTQTYYYDPDQTVTNTTEVSKVTIDFSIRTMITLDPLVFNCEEFICDKDPTCRTQFSSYCQTTQPILAALKDAFEKYNRSIADYTSTIRALTNTTQDLFASATPVRYRRGVEVPLGYGHDLEQPSWVYDLGGTAIVPWIGTAVAVGKLANRVASIEATLYQITQGVKQSIQSTNDKFDKITNILHTHLRPVTEGLVRTNEQLNAFSKQVRDQFTMINTVTTELSAYVDQLQQVFTVGAFYQNQILQVISQLNSLQVYVDTLTSSFTDCISDLNQKILSPACITTHQLLQINKPSDNLGLKNVLTHYINGSAATFYHLTSTKGVYKPLPKLFNNTHFLAPTTAYNPVTGTCFFCGSNACDKSVTVDCDYQPQPLQSTILAVYPTPTGLDLLTITSNKTFEIKHGSTVVTSVAIPPPPILSSTININVTFQQQLLQLQEQVDQLNLQTNYTTTEIQSIIDKYNVEIQNALNQIVDFGPGTPSLALWKVILILIAVVVVIVIIATTIFCSVRKNQSELPLQVLSRLR.

The first 15 residues, 1-15 (MWLITILATISCVTA), serve as a signal peptide directing secretion. At 16–1181 (QLSQTNPDCP…PGTPSLALWK (1166 aa)) the chain is on the virion surface side. 15 N-linked (GlcNAc...) asparagine; by host glycosylation sites follow: Asn60, Asn80, Asn111, Asn262, Asn403, Asn601, Asn644, Asn711, Asn774, Asn789, Asn1004, Asn1028, Asn1091, Asn1121, and Asn1143. A coiled-coil region spans residues 1118 to 1169 (ININVTFQQQLLQLQEQVDQLNLQTNYTTTEIQSIIDKYNVEIQNALNQIVD). Residues 1182 to 1202 (VILILIAVVVVIVIIATTIFC) form a helical membrane-spanning segment. The Intravirion segment spans residues 1203-1220 (SVRKNQSELPLQVLSRLR).

Belongs to the torovirinae spike protein family. In terms of assembly, homotrimer.

It is found in the virion membrane. Functionally, mediates the binding of virions to the host cell receptor and is involved in membrane fusion. The protein is Spike glycoprotein (S) of Blicca bjoerkna (white bream).